We begin with the raw amino-acid sequence, 552 residues long: Dihydroxy-acid dehydratase (552 aa).

D78 provides a ligand contact to Mg(2+). C119 provides a ligand contact to [2Fe-2S] cluster. The Mg(2+) site is built by D120 and K121. K121 bears the N6-carboxylysine mark. C191 contributes to the [2Fe-2S] cluster binding site. E442 is a Mg(2+) binding site. The active-site Proton acceptor is the S468.

This sequence belongs to the IlvD/Edd family. In terms of assembly, homodimer. It depends on [2Fe-2S] cluster as a cofactor. Mg(2+) serves as cofactor.

The enzyme catalyses (2R)-2,3-dihydroxy-3-methylbutanoate = 3-methyl-2-oxobutanoate + H2O. It catalyses the reaction (2R,3R)-2,3-dihydroxy-3-methylpentanoate = (S)-3-methyl-2-oxopentanoate + H2O. It functions in the pathway amino-acid biosynthesis; L-isoleucine biosynthesis; L-isoleucine from 2-oxobutanoate: step 3/4. The protein operates within amino-acid biosynthesis; L-valine biosynthesis; L-valine from pyruvate: step 3/4. In terms of biological role, functions in the biosynthesis of branched-chain amino acids. Catalyzes the dehydration of (2R,3R)-2,3-dihydroxy-3-methylpentanoate (2,3-dihydroxy-3-methylvalerate) into 2-oxo-3-methylpentanoate (2-oxo-3-methylvalerate) and of (2R)-2,3-dihydroxy-3-methylbutanoate (2,3-dihydroxyisovalerate) into 2-oxo-3-methylbutanoate (2-oxoisovalerate), the penultimate precursor to L-isoleucine and L-valine, respectively. The sequence is that of Dihydroxy-acid dehydratase from Ruminiclostridium cellulolyticum (strain ATCC 35319 / DSM 5812 / JCM 6584 / H10) (Clostridium cellulolyticum).